The primary structure comprises 102 residues: Large ribosomal subunit protein uL24 (102 aa).

The protein belongs to the universal ribosomal protein uL24 family. Part of the 50S ribosomal subunit.

Its function is as follows. One of two assembly initiator proteins, it binds directly to the 5'-end of the 23S rRNA, where it nucleates assembly of the 50S subunit. In terms of biological role, one of the proteins that surrounds the polypeptide exit tunnel on the outside of the subunit. The protein is Large ribosomal subunit protein uL24 of Rhizobium johnstonii (strain DSM 114642 / LMG 32736 / 3841) (Rhizobium leguminosarum bv. viciae).